We begin with the raw amino-acid sequence, 506 residues long: SPbeta prophage-derived uncharacterized protein YonE (506 aa).

Residues 473–506 form a disordered region; that stretch reads YTFTGNEVGRPNEGNKNNDNTVKSATSNGNDNPI. Residues 486 to 506 are compositionally biased toward polar residues; the sequence is GNKNNDNTVKSATSNGNDNPI.

This chain is SPbeta prophage-derived uncharacterized protein YonE (yonE), found in Bacillus subtilis (strain 168).